The primary structure comprises 1822 residues: Integrin beta-4 (1822 aa).

The signal sequence occupies residues 1–27 (MAGPRPSPWARLLLAALISVSLSGTLA). At 28–710 (NRCKKAPVKS…HKKKDCPPGS (683 aa)) the chain is on the extracellular side. Residues 29 to 73 (RCKKAPVKSCTECVRVDKDCAYCTDEMFRDRRCNTQAELLAAGCQ) enclose the PSI domain. 8 disulfides stabilise this stretch: cysteine 30/cysteine 48, cysteine 38/cysteine 455, cysteine 41/cysteine 61, cysteine 51/cysteine 72, cysteine 245/cysteine 288, cysteine 457/cysteine 476, cysteine 468/cysteine 479, and cysteine 481/cysteine 490. Residues 131–329 (DLYILMDFSN…IPIFAVTNYS (199 aa)) form the VWFA domain. Serine 139 and serine 141 together coordinate Mg(2+). Ca(2+) is bound by residues serine 141, aspartate 144, aspartate 145, and aspartate 176. The involved in NRG1- and IGF1-binding stretch occupies residues 194–199 (WPNSDP). Residues asparagine 228, aspartate 230, proline 232, and glutamate 233 each coordinate Ca(2+). Glutamate 233 provides a ligand contact to Mg(2+). Residue asparagine 327 is glycosylated (N-linked (GlcNAc...) asparagine). Glutamate 350 contacts Ca(2+). 4 consecutive I-EGF domains span residues 457–491 (CELQ…QTCN), 492–537 (CSTG…QFCE), 538–574 (YDNF…PSCD), and 575–615 (CPLS…TICE). The N-linked (GlcNAc...) asparagine glycan is linked to asparagine 491. 11 disulfides stabilise this stretch: cysteine 492-cysteine 520, cysteine 503-cysteine 518, cysteine 512-cysteine 523, cysteine 525-cysteine 536, cysteine 543-cysteine 557, cysteine 551-cysteine 562, cysteine 564-cysteine 573, cysteine 575-cysteine 598, cysteine 582-cysteine 596, cysteine 590-cysteine 601, and cysteine 603-cysteine 614. Asparagine 579 carries an N-linked (GlcNAc...) asparagine glycan. An N-linked (GlcNAc...) asparagine glycan is attached at asparagine 617. 4 disulfides stabilise this stretch: cysteine 626/cysteine 671, cysteine 632/cysteine 651, cysteine 635/cysteine 648, and cysteine 680/cysteine 706. Asparagine 695 carries N-linked (GlcNAc...) asparagine glycosylation. The helical transmembrane segment at 711 to 733 (FWWLIPLLLLLLPLLALLLLLCW) threads the bilayer. Positions 732-749 (CWKYCACCKACLALLPCC) are palmitoylated on several cysteines. Residues 734 to 1822 (KYCACCKACL…THMDQQFFQT (1089 aa)) lie on the Cytoplasmic side of the membrane. A phosphoserine mark is found at serine 771, serine 1069, and serine 1119. The 106-residue stretch at 979–1084 (VNITIIKEQA…QVRRFHVQLS (106 aa)) folds into the Calx-beta domain. Positions 1113–1140 (TSQMLSSQPPPHGDLGAPQNPNAKAAGS) are disordered. 2 Fibronectin type-III domains span residues 1129–1218 (APQN…THQE) and 1222–1321 (EPGR…TQPK). Residues 1400-1444 (LSASSGRSSDAEAPHGPPDDGGAGGKGGSLPRSATPGPPGEHLVN) form a disordered region. A compositionally biased stretch (gly residues) spans 1418–1427 (DDGGAGGKGG). 3 positions are modified to phosphoserine: serine 1454, serine 1457, and serine 1474. Threonine 1487 is modified (phosphothreonine). The residue at position 1494 (serine 1494) is a Phosphoserine. Residues 1495 to 1525 (LTRSEHSHSTTLPRDYSTLTSVSSHDSRLTA) are disordered. Residues 1503–1518 (STTLPRDYSTLTSVSS) are compositionally biased toward polar residues. Threonine 1530 carries the phosphothreonine modification. 2 Fibronectin type-III domains span residues 1530–1625 (TPTR…VHPQ) and 1643–1739 (APGP…SQDG). Position 1791 is a phosphoserine (serine 1791).

Belongs to the integrin beta chain family. Heterodimer of an alpha and a beta subunit. Beta-4 associates with alpha-6. Interacts (via cytoplasmic region) with COL17A1 (via cytoplasmic region). Interacts (via cytoplasmic region) with DST isoform 3 (via N-terminus). Isoform beta-4a interacts (via cytoplasmic domain) with DST (via N-terminus). Interacts with RAC1. ITGA6:ITGB4 is found in a ternary complex with NRG1 and ERBB3. ITGA6:ITGB4 is found in a ternary complex with IGF1 and IGF1R. ITGA6:ITGB4 interacts with IGF2. Interacts with TMEM268; this interaction prevents ITGB4 degradation. Post-translationally, palmitoylated by DHHC3 at several cysteines of the membrane-proximal region, enhancing stability and cell surface expression. Palmitoylation also promotes secondary association with tertaspanins. Integrin alpha-6/beta-4 is predominantly expressed by epithelia. Isoform beta-4D is also expressed in colon and placenta. Isoform beta-4E is also expressed in epidermis, lung, duodenum, heart, spleen and stomach.

The protein localises to the cell membrane. It localises to the cell junction. It is found in the hemidesmosome. Its function is as follows. Integrin alpha-6/beta-4 is a receptor for laminin. Plays a critical structural role in the hemidesmosome of epithelial cells. Is required for the regulation of keratinocyte polarity and motility. ITGA6:ITGB4 binds to NRG1 (via EGF domain) and this binding is essential for NRG1-ERBB signaling. ITGA6:ITGB4 binds to IGF1 and this binding is essential for IGF1 signaling. ITGA6:ITGB4 binds to IGF2 and this binding is essential for IGF2 signaling. This is Integrin beta-4 (ITGB4) from Homo sapiens (Human).